The chain runs to 450 residues: UDP-N-acetylmuramoylalanine--D-glutamate ligase (450 aa).

An ATP-binding site is contributed by Gly119–Thr125.

This sequence belongs to the MurCDEF family.

It is found in the cytoplasm. The enzyme catalyses UDP-N-acetyl-alpha-D-muramoyl-L-alanine + D-glutamate + ATP = UDP-N-acetyl-alpha-D-muramoyl-L-alanyl-D-glutamate + ADP + phosphate + H(+). The protein operates within cell wall biogenesis; peptidoglycan biosynthesis. Cell wall formation. Catalyzes the addition of glutamate to the nucleotide precursor UDP-N-acetylmuramoyl-L-alanine (UMA). The polypeptide is UDP-N-acetylmuramoylalanine--D-glutamate ligase (Streptococcus thermophilus (strain CNRZ 1066)).